The sequence spans 294 residues: Acetylglutamate kinase (294 aa).

Residues 63-64 (GG), Arg-85, and Asn-188 each bind substrate.

Belongs to the acetylglutamate kinase family. ArgB subfamily.

It is found in the cytoplasm. The enzyme catalyses N-acetyl-L-glutamate + ATP = N-acetyl-L-glutamyl 5-phosphate + ADP. It participates in amino-acid biosynthesis; L-arginine biosynthesis; N(2)-acetyl-L-ornithine from L-glutamate: step 2/4. Its function is as follows. Catalyzes the ATP-dependent phosphorylation of N-acetyl-L-glutamate. The polypeptide is Acetylglutamate kinase (Methanococcus maripaludis (strain DSM 14266 / JCM 13030 / NBRC 101832 / S2 / LL)).